Reading from the N-terminus, the 124-residue chain is Large ribosomal subunit protein uL18 (124 aa).

It belongs to the universal ribosomal protein uL18 family. In terms of assembly, part of the 50S ribosomal subunit; part of the 5S rRNA/L5/L18/L25 subcomplex. Contacts the 5S and 23S rRNAs.

In terms of biological role, this is one of the proteins that bind and probably mediate the attachment of the 5S RNA into the large ribosomal subunit, where it forms part of the central protuberance. The protein is Large ribosomal subunit protein uL18 of Desulfosudis oleivorans (strain DSM 6200 / JCM 39069 / Hxd3) (Desulfococcus oleovorans).